The chain runs to 188 residues: uncharacterized protein (188 aa).

The signal sequence occupies residues 1 to 23 (MFKGQKTLAALAVSLLFTAPVYA). A disulfide bridge links C42 with C81.

This sequence belongs to the fimbrial protein family.

It localises to the fimbrium. This is an uncharacterized protein from Escherichia coli (strain K12).